The following is a 282-amino-acid chain: Pantothenate synthetase (282 aa).

Residue 30–37 (MGYLHEGH) participates in ATP binding. The active-site Proton donor is H37. (R)-pantoate is bound at residue Q61. Q61 contributes to the beta-alanine binding site. 147–150 (GMKD) is an ATP binding site. Q153 contributes to the (R)-pantoate binding site. ATP contacts are provided by residues V176 and 184 to 187 (KSSR).

It belongs to the pantothenate synthetase family. In terms of assembly, homodimer.

It is found in the cytoplasm. It catalyses the reaction (R)-pantoate + beta-alanine + ATP = (R)-pantothenate + AMP + diphosphate + H(+). Its pathway is cofactor biosynthesis; (R)-pantothenate biosynthesis; (R)-pantothenate from (R)-pantoate and beta-alanine: step 1/1. Its function is as follows. Catalyzes the condensation of pantoate with beta-alanine in an ATP-dependent reaction via a pantoyl-adenylate intermediate. This is Pantothenate synthetase from Bacillus cereus (strain ZK / E33L).